A 162-amino-acid polypeptide reads, in one-letter code: Regulator of sigma D (162 aa).

The protein belongs to the Rsd/AlgQ family. As to quaternary structure, interacts with RpoD.

Its subcellular location is the cytoplasm. Its function is as follows. Binds RpoD and negatively regulates RpoD-mediated transcription activation by preventing the interaction between the primary sigma factor RpoD with the catalytic core of the RNA polymerase and with promoter DNA. May be involved in replacement of the RNA polymerase sigma subunit from RpoD to RpoS during the transition from exponential growth to the stationary phase. The polypeptide is Regulator of sigma D (Salmonella choleraesuis (strain SC-B67)).